A 273-amino-acid chain; its full sequence is Large ribosomal subunit protein uL2 (273 aa).

The interval 221 to 263 (RGTAMNPVDHPHGGGEGRNFGKHPVSPWGLKTKGKKTRRNKRT) is disordered. Residues 252 to 263 (TKGKKTRRNKRT) show a composition bias toward basic residues.

This sequence belongs to the universal ribosomal protein uL2 family. Part of the 50S ribosomal subunit. Forms a bridge to the 30S subunit in the 70S ribosome.

Functionally, one of the primary rRNA binding proteins. Required for association of the 30S and 50S subunits to form the 70S ribosome, for tRNA binding and peptide bond formation. It has been suggested to have peptidyltransferase activity; this is somewhat controversial. Makes several contacts with the 16S rRNA in the 70S ribosome. This Buchnera aphidicola subsp. Cinara cedri (strain Cc) protein is Large ribosomal subunit protein uL2.